We begin with the raw amino-acid sequence, 552 residues long: Arginine--tRNA ligase (552 aa).

A 'HIGH' region motif is present at residues 130–140 (ANPTGPLSIGH).

This sequence belongs to the class-I aminoacyl-tRNA synthetase family. In terms of assembly, monomer.

Its subcellular location is the cytoplasm. The enzyme catalyses tRNA(Arg) + L-arginine + ATP = L-arginyl-tRNA(Arg) + AMP + diphosphate. This Desulfotalea psychrophila (strain LSv54 / DSM 12343) protein is Arginine--tRNA ligase.